Consider the following 379-residue polypeptide: Probable protein arginine N-methyltransferase 6.1 (379 aa).

Residues 1 to 35 (MLPSHLNGHSPLARRRPRLSAASPPATGDSDAAAA) are disordered. Residues 19-35 (LSAASPPATGDSDAAAA) are compositionally biased toward low complexity. The SAM-dependent MTase PRMT-type domain maps to 45 to 379 (DRIYFQSYSH…FLNIQLDCTM (335 aa)). Positions 58, 67, 91, 113, and 142 each coordinate S-adenosyl-L-methionine. Residues Glu156 and Glu165 contribute to the active site.

The protein belongs to the class I-like SAM-binding methyltransferase superfamily. Protein arginine N-methyltransferase family. PRMT6 subfamily.

Its function is as follows. Arginine methyltransferase that can both catalyze the formation of omega-N monomethylarginine (MMA) and asymmetrical dimethylarginine (aDMA). The chain is Probable protein arginine N-methyltransferase 6.1 (PRMT6.1) from Oryza sativa subsp. indica (Rice).